The chain runs to 465 residues: Ras GTPase-activating protein-binding protein 1 (465 aa).

Positions 11–133 (VGREFVRQYY…FYVHNDIFRY (123 aa)) constitute an NTF2 domain. Glycyl lysine isopeptide (Lys-Gly) (interchain with G-Cter in ubiquitin) cross-links involve residues lysine 36, lysine 50, lysine 59, lysine 64, lysine 76, and lysine 123. The tract at residues 142 to 224 (ITEPQEESEE…EPVLEETAPE (83 aa)) is acidic disordered region. The residue at position 143 (threonine 143) is a Phosphothreonine. Acidic residues-rich tracts occupy residues 145 to 157 (PQEESEEEVEEPE) and 184 to 205 (EHLEEPVAEPEPEPEPEPEQEP). The disordered stretch occupies residues 145 to 242 (PQEESEEEVE…APADIAQTVQ (98 aa)). Serine 149 carries the post-translational modification Phosphoserine. Phosphoserine occurs at positions 230, 231, 249, and 252. The segment at 254-326 (TSKNLPPSGA…PVREAGEQGD (73 aa)) is disordered. Composition is skewed to basic and acidic residues over residues 296 to 306 (PQRDQRVREQR) and 317 to 326 (PVREAGEQGD). The region spanning 339–414 (HQLFIGNLPH…VRLNVEEKKT (76 aa)) is the RRM domain. Glycyl lysine isopeptide (Lys-Gly) (interchain with G-Cter in ubiquitin) cross-links involve residues lysine 352 and lysine 356. The residue at position 372 (serine 372) is a Phosphoserine. A Glycyl lysine isopeptide (Lys-Gly) (interchain with G-Cter in ubiquitin) cross-link involves residue lysine 375. Lysine 375 carries the post-translational modification N6-acetyllysine; alternate. Lysine 375 is covalently cross-linked (Glycyl lysine isopeptide (Lys-Gly) (interchain with G-Cter in SUMO2); alternate). Residue lysine 392 forms a Glycyl lysine isopeptide (Lys-Gly) (interchain with G-Cter in ubiquitin); alternate linkage. Residues 409–465 (VEEKKTRAAREGDRRDNRLRGPGGPRGGLGGGMRGPPRGGMVQKPGFGVGRSIAPRQ) form an RG-rich region region. The span at 412–427 (KKTRAAREGDRRDNRL) shows a compositional bias: basic and acidic residues. The disordered stretch occupies residues 412-465 (KKTRAAREGDRRDNRLRGPGGPRGGLGGGMRGPPRGGMVQKPGFGVGRSIAPRQ). An Asymmetric dimethylarginine modification is found at arginine 428. The segment covering 429–446 (GPGGPRGGLGGGMRGPPR) has biased composition (gly residues). Asymmetric dimethylarginine; alternate is present on arginine 434. Omega-N-methylarginine; alternate occurs at positions 434, 446, 459, and 464. Arginine 459 carries the post-translational modification Dimethylated arginine; alternate.

In terms of assembly, homodimer and oligomer. Component of a TAU mRNP complex, at least composed of IGF2BP1, ELAVL4 and G3BP1. Binds to the SH3 domain of Ras GTPase-activating protein (RASA1) in proliferating cells. No interaction in quiescent cells. Interacts (via NTF2 domain) with USP10; inhibiting stress granule formation by lowering G3BP1 valence. Interacts (via NTF2 domain) with CAPRIN1; promoting stress granule formation by lowering the saturation-concentration of G3BP1. Interacts (via NTF2 domain) with UBAP2L; promoting stress granule formation. Associates (via RG-rich region) with 40S ribosome subunits. Interacts with RPTOR and SPAG5; this complex is increased by oxidative stress. Interacts with ATXN2L. Interacts with STYXL1. Interacts with CGAS (via N-terminus); this interaction promotes the DNA-binding and activation of CGAS. Interacts (via C-terminus) with RIGI. Interacts with PABPC1. Interacts with QKI (isoforms QKI6 and QKI7); directing N(7)-methylguanine-containing mRNAs to stress granules. It depends on Mg(2+) as a cofactor. In terms of processing, phosphorylation of the acidic disordered region regulates stress granule assembly. RASA1-dependent phosphorylation of Ser-149 induces a conformational change that prevents self-association. Dephosphorylation after HRAS activation is required for stress granule assembly. Ser-149 phosphorylation induces partial nuclear localization. Post-translationally, arg-435 is dimethylated, probably to asymmetric dimethylarginine. Ubiquitinated by TRIM21 via 'Lys-63'-linked polyubiquitination in the NTF2 domain in response to heat shock, leading to stress granule disassembly: ubiquitination promotes interaction with the FAF2 adapter, followed by interaction with VCP, which extracts G3BP1 from stress granules, leading to stress granule disassembly. In case of prolonged stress, ubiquitination by TRIM21 leads to autophagy-dependent degradation of G3BP1 via recruitment of ubiquitinated G3BP1 by SQSTM1 and/or CALCOCO2 to autophagosomes.

The protein localises to the cytoplasm. It localises to the cytosol. Its subcellular location is the perikaryon. It is found in the stress granule. The protein resides in the nucleus. The enzyme catalyses ATP + H2O = ADP + phosphate + H(+). Under physiological conditions, G3BP1 adopts a compact state that is stabilized by intramolecular interactions between the RG-rich and the acidic regions that inhibit phase separation. Upon stress, polysomes disassemble and mRNAs are released in an unfolded protein-free state. Binding of unfolded mRNA to G3BP1 outcompetes the intramolecular interactions and RNA-bound G3BP1 adopts an expanded conformation in which the RG-rich region becomes exposed to engage in protein-protein and protein-RNA interactions, allowing physical cross-linking of RNA molecules to form protein-RNA condensates, leading to liquid-liquid phase separation (LLPS). Protein involved in various processes, such as stress granule formation and innate immunity. Plays an essential role in stress granule formation. Stress granules are membraneless compartments that store mRNAs and proteins, such as stalled translation pre-initiation complexes, in response to stress. Promotes formation of stress granules phase-separated membraneless compartment by undergoing liquid-liquid phase separation (LLPS) upon unfolded RNA-binding: functions as a molecular switch that triggers RNA-dependent LLPS in response to a rise in intracellular free RNA concentrations. Also acts as an ATP- and magnesium-dependent helicase: unwinds DNA/DNA, RNA/DNA, and RNA/RNA substrates with comparable efficiency. Acts unidirectionally by moving in the 5' to 3' direction along the bound single-stranded DNA. Unwinds preferentially partial DNA and RNA duplexes having a 17 bp annealed portion and either a hanging 3' tail or hanging tails at both 5'- and 3'-ends. Plays an essential role in innate immunity by promoting CGAS and RIGI activity. Participates in the DNA-triggered cGAS/STING pathway by promoting the DNA binding and activation of CGAS. Triggers the condensation of cGAS, a process probably linked to the formation of membrane-less organelles. Also enhances RIGI-induced type I interferon production probably by helping RIGI at sensing pathogenic RNA. May also act as a phosphorylation-dependent sequence-specific endoribonuclease in vitro: Cleaves exclusively between cytosine and adenine and cleaves MYC mRNA preferentially at the 3'-UTR. This chain is Ras GTPase-activating protein-binding protein 1 (G3BP1), found in Bos taurus (Bovine).